The following is a 382-amino-acid chain: Required for respiratory growth protein 1, mitochondrial (382 aa).

This sequence belongs to the RRG1 family.

The protein resides in the mitochondrion. In terms of biological role, essential for respiratory growth and required for mitochondrial protein synthesis. Required for vacuolar acidification. This is Required for respiratory growth protein 1, mitochondrial (RRG1) from Vanderwaltozyma polyspora (strain ATCC 22028 / DSM 70294 / BCRC 21397 / CBS 2163 / NBRC 10782 / NRRL Y-8283 / UCD 57-17) (Kluyveromyces polysporus).